We begin with the raw amino-acid sequence, 149 residues long: 17 kDa major membrane protein (149 aa).

The first 19 residues, 1-19 (MKKIIKLSLLSLSIAGLAS), serve as a signal peptide directing secretion. Cys-20 carries the N-palmitoyl cysteine lipid modification. Cys-20 is lipidated: S-diacylglycerol cysteine.

The protein resides in the cell outer membrane. The sequence is that of 17 kDa major membrane protein from Francisella tularensis subsp. holarctica (strain LVS).